Here is a 423-residue protein sequence, read N- to C-terminus: Histidine--tRNA ligase (423 aa).

The protein belongs to the class-II aminoacyl-tRNA synthetase family.

The protein localises to the cytoplasm. The enzyme catalyses tRNA(His) + L-histidine + ATP = L-histidyl-tRNA(His) + AMP + diphosphate + H(+). The chain is Histidine--tRNA ligase from Picrophilus torridus (strain ATCC 700027 / DSM 9790 / JCM 10055 / NBRC 100828 / KAW 2/3).